Reading from the N-terminus, the 331-residue chain is GTP 3',8-cyclase 2 (331 aa).

The region spanning 9–234 is the Radical SAM core domain; it reads PFGRRITYLR…PSLARSGGPS (226 aa). Arg18 contacts GTP. The [4Fe-4S] cluster site is built by Cys25 and Cys29. Tyr31 lines the S-adenosyl-L-methionine pocket. Cys32 is a binding site for [4Fe-4S] cluster. Arg67 contributes to the GTP binding site. S-adenosyl-L-methionine is bound at residue Gly71. Thr98 is a binding site for GTP. Ser122 contacts S-adenosyl-L-methionine. A GTP-binding site is contributed by Lys159. Met193 serves as a coordination point for S-adenosyl-L-methionine. [4Fe-4S] cluster-binding residues include Cys257 and Cys260. 262–264 contributes to the GTP binding site; that stretch reads RVR. Cys274 provides a ligand contact to [4Fe-4S] cluster.

It belongs to the radical SAM superfamily. MoaA family. As to quaternary structure, monomer and homodimer. Requires [4Fe-4S] cluster as cofactor.

The enzyme catalyses GTP + AH2 + S-adenosyl-L-methionine = (8S)-3',8-cyclo-7,8-dihydroguanosine 5'-triphosphate + 5'-deoxyadenosine + L-methionine + A + H(+). It participates in cofactor biosynthesis; molybdopterin biosynthesis. In terms of biological role, catalyzes the cyclization of GTP to (8S)-3',8-cyclo-7,8-dihydroguanosine 5'-triphosphate. This chain is GTP 3',8-cyclase 2 (moaA2), found in Pseudomonas aeruginosa (strain ATCC 15692 / DSM 22644 / CIP 104116 / JCM 14847 / LMG 12228 / 1C / PRS 101 / PAO1).